A 231-amino-acid polypeptide reads, in one-letter code: Uracil-DNA glycosylase (231 aa).

D74 serves as the catalytic Proton acceptor.

Belongs to the uracil-DNA glycosylase (UDG) superfamily. UNG family.

It localises to the cytoplasm. It catalyses the reaction Hydrolyzes single-stranded DNA or mismatched double-stranded DNA and polynucleotides, releasing free uracil.. In terms of biological role, excises uracil residues from the DNA which can arise as a result of misincorporation of dUMP residues by DNA polymerase or due to deamination of cytosine. In Campylobacter jejuni subsp. doylei (strain ATCC BAA-1458 / RM4099 / 269.97), this protein is Uracil-DNA glycosylase.